Consider the following 365-residue polypeptide: Alanine racemase (365 aa).

K32 functions as the Proton acceptor; specific for D-alanine in the catalytic mechanism. K32 bears the N6-(pyridoxal phosphate)lysine mark. R128 contributes to the substrate binding site. Y257 (proton acceptor; specific for L-alanine) is an active-site residue. M305 is a binding site for substrate.

This sequence belongs to the alanine racemase family. Pyridoxal 5'-phosphate serves as cofactor.

It catalyses the reaction L-alanine = D-alanine. It participates in amino-acid biosynthesis; D-alanine biosynthesis; D-alanine from L-alanine: step 1/1. Its function is as follows. Catalyzes the interconversion of L-alanine and D-alanine. May also act on other amino acids. This is Alanine racemase (alr) from Francisella tularensis subsp. mediasiatica (strain FSC147).